Reading from the N-terminus, the 690-residue chain is MPRQHAIEDYRNFGIMAHIDAGKTTTTERILYYTGKSHKIGEVHEGAATMDWMEQEQERGITITSAATTAFWNGKRLNIIDTPGHVDFTIEVERSLRVLDGAVCVLDSNQGVEPQTETVWRQGDKYKVPRIVFANKMDKTGADFFKCLADIVDRLGAKPVAIQLPIGAENNFKGCIDLVTMKAIVWNDESLGAKFDHVEIPAELADQAKEYREKLVEAAVELDDDAMSAYLEGTEPDEATLKRLIRKAVLSGAFYPVLCGSAFKNKGVQPLLDAVVDYLPSPLDVPAIKGTDDKGNEVVRKADDKEPLSLLAFKIMDDPFVGTITFCRIYSGILTSGTGVVNSTREKKERIGRMLLMHANNREDIKEAYAGDIVALAGLKEARTGDTLCDPNNQVILEKMEFPEPVIEIAIEPKSKADQEKLGIALAKLAAEDPSFRVSTDHESGQTILKGMGELHLDIKVDILKRTYKVDANIGAPQVAFRERITKPANVDYTHKKQTGGTGQFAAVSLVVEPNEPGGGYVFESKIVGGAVPKEYIPGVEKGIESVLGAGVVAGFPVVDVKVALVDGKYHDVDSSALAFEIASRAAFREALQKGKSVLLEPIMKVEVVTPEDYTGSVIGDLNSRRGQIQGQDMRGNANVINAMVPLMNMFGYVNNLRSMSQGRATFTMQFSHYAEAPANVSAEVQKKFA.

The tr-type G domain maps to 8-283 (EDYRNFGIMA…AVVDYLPSPL (276 aa)). Residues 17-24 (AHIDAGKT), 81-85 (DTPGH), and 135-138 (NKMD) contribute to the GTP site.

The protein belongs to the TRAFAC class translation factor GTPase superfamily. Classic translation factor GTPase family. EF-G/EF-2 subfamily.

Its subcellular location is the cytoplasm. Its function is as follows. Catalyzes the GTP-dependent ribosomal translocation step during translation elongation. During this step, the ribosome changes from the pre-translocational (PRE) to the post-translocational (POST) state as the newly formed A-site-bound peptidyl-tRNA and P-site-bound deacylated tRNA move to the P and E sites, respectively. Catalyzes the coordinated movement of the two tRNA molecules, the mRNA and conformational changes in the ribosome. This is Elongation factor G from Bradyrhizobium sp. (strain BTAi1 / ATCC BAA-1182).